The sequence spans 166 residues: MSNIEKQAGELQEKLIAVNRVSKTVKGGRIMSFTALTVVGDGNGRVGFGYGKAREVPAAIQKAMEKARRNMINVALNEGTLQHPVKGSHTGSRVFMQPASEGTGIIAGGAMRAVLEVAGVHNVLSKAYGSTNPINVVRATIDALANMKSPEMVAAKRGKTVEEIWG.

The region spanning 11 to 74 (LQEKLIAVNR…EKARRNMINV (64 aa)) is the S5 DRBM domain.

It belongs to the universal ribosomal protein uS5 family. Part of the 30S ribosomal subunit. Contacts proteins S4 and S8.

Its function is as follows. With S4 and S12 plays an important role in translational accuracy. Functionally, located at the back of the 30S subunit body where it stabilizes the conformation of the head with respect to the body. This Haemophilus ducreyi (strain 35000HP / ATCC 700724) protein is Small ribosomal subunit protein uS5.